A 387-amino-acid chain; its full sequence is Protein FAM153B (387 aa).

Disordered regions lie at residues 233–256 (SYNG…RGDL) and 327–374 (TITG…KKSR). Positions 336 to 345 (SASPSSAPAE) are enriched in low complexity. Residues 347-359 (ATEKTKVEEEVKT) are compositionally biased toward basic and acidic residues. A compositionally biased stretch (basic residues) spans 360-374 (RKPKKKTRKPSKKSR).

The protein belongs to the FAM153 family.

In Homo sapiens (Human), this protein is Protein FAM153B (FAM153B).